Consider the following 399-residue polypeptide: Exodeoxyribonuclease 7 large subunit (399 aa).

This sequence belongs to the XseA family. In terms of assembly, heterooligomer composed of large and small subunits.

The protein localises to the cytoplasm. It carries out the reaction Exonucleolytic cleavage in either 5'- to 3'- or 3'- to 5'-direction to yield nucleoside 5'-phosphates.. Bidirectionally degrades single-stranded DNA into large acid-insoluble oligonucleotides, which are then degraded further into small acid-soluble oligonucleotides. The sequence is that of Exodeoxyribonuclease 7 large subunit from Clostridium beijerinckii (strain ATCC 51743 / NCIMB 8052) (Clostridium acetobutylicum).